Here is a 490-residue protein sequence, read N- to C-terminus: Acetyl-coenzyme A carboxylase carboxyl transferase subunit beta, chloroplastic (490 aa).

Residues 221–490 (LWVQCENCYG…PLNQKSSKIK (270 aa)) enclose the CoA carboxyltransferase N-terminal domain. Zn(2+)-binding residues include Cys-225, Cys-228, Cys-244, and Cys-247. Residues 225–247 (CENCYGLNYKKFLKSKMNICEQC) form a C4-type zinc finger.

Belongs to the AccD/PCCB family. Acetyl-CoA carboxylase is a heterohexamer composed of biotin carboxyl carrier protein, biotin carboxylase and 2 subunits each of ACCase subunit alpha and ACCase plastid-coded subunit beta (accD). It depends on Zn(2+) as a cofactor. Expressed in leaves, ripening and mature fruit.

It localises to the plastid. Its subcellular location is the chloroplast stroma. It is found in the chromoplast stroma. It carries out the reaction N(6)-carboxybiotinyl-L-lysyl-[protein] + acetyl-CoA = N(6)-biotinyl-L-lysyl-[protein] + malonyl-CoA. Its pathway is lipid metabolism; malonyl-CoA biosynthesis; malonyl-CoA from acetyl-CoA: step 1/1. Functionally, component of the acetyl coenzyme A carboxylase (ACC) complex. Biotin carboxylase (BC) catalyzes the carboxylation of biotin on its carrier protein (BCCP) and then the CO(2) group is transferred by the transcarboxylase to acetyl-CoA to form malonyl-CoA. Is up-regulated upon chromoplast differentiation, presumably for fatty acid biosynthesis. The protein is Acetyl-coenzyme A carboxylase carboxyl transferase subunit beta, chloroplastic of Solanum lycopersicum (Tomato).